Reading from the N-terminus, the 188-residue chain is MSVLPTPLANQLLIALPALSDPTFSRSVALICQHDENGAMGVLVNRPSEYTLGEVLSQMGIDTVDEHLREQIVLSGGPVHPERGFVIHDDARDWDSSLEVGQGVYLTTSRDILEAMAAGEGPRNALVALGCAGWGAGQLEFELGENSWLTAPSDANVLFATALEDRWQTAAGRIGVDLFRLTDYSGHA.

Belongs to the UPF0301 (AlgH) family.

In Xanthomonas axonopodis pv. citri (strain 306), this protein is UPF0301 protein XAC2918.